Consider the following 847-residue polypeptide: FAST kinase domain-containing protein 1, mitochondrial (847 aa).

N6-acetyllysine is present on Lys-360. Residues 777-837 (IALEFLDSKA…KDARMDYLRE (61 aa)) form the RAP domain.

This sequence belongs to the FAST kinase family. As to expression, expression detected in spleen, thymus, testis, ovary, colon, heart, smooth muscle, kidney, brain, lung, liver and white adipose tissue with highest expression in heart.

Its subcellular location is the mitochondrion. In terms of biological role, involved in the down-regulation of mitochondrial MT-ND3 mRNA levels which leads to decreased respiratory complex I abundance and activity. The chain is FAST kinase domain-containing protein 1, mitochondrial (FASTKD1) from Homo sapiens (Human).